The primary structure comprises 520 residues: MSLVLNRTDLLVVAGALFLTFLTTRFIRAAQRYHLPPGPTRIPLLGNLHQVPLHDQQKTFAEWVKKYGDIIYIQLLSKPFVIVSSVRAAQDLMEKRAVKYSDRPYFLLLCEFVMTRPLMIFMQHGDRWRRLRRWYQGSLENKSVLEGYRPVLRREIGRLLSSLAEAPQDFMSHIKRYNGAVMLDIAYGHRVTSAEDEFMVFADKTISTVTSLGSFAATLVDFFPILRYFPAWTPGSGFKKQALMAKEMWDEMEDIPYRKLRHEMGSDAVNRSFTTFMIGEVSHDGKLGADDEIDIKGSATLMYVAGSDTTMTTMTTFVLAMTLYPEVARKAQAEIDHVVGLSRLPGLDDKDSLPYLECIIKELYRWNPPVPLGVPHRLCVDDNYRGYDIPGGSMIVPNVWAMSRDPSLYPDTKTFRPERFEGLDAQAMKFRDPRKYIFGFGRRICPGRYLADSNVWLFLASVLASMDIGRAHDAAGHEIIPTPSFKDGIISHVEPFQCTIRPRSERAAQLIRESTGNTSA.

Asn-6 carries an N-linked (GlcNAc...) asparagine glycan. The chain crosses the membrane as a helical span at residues Leu-10–Ile-27. 2 N-linked (GlcNAc...) asparagine glycosylation sites follow: Asn-141 and Asn-270. Cys-445 contributes to the heme binding site. The N-linked (GlcNAc...) asparagine glycan is linked to Asn-517.

Belongs to the cytochrome P450 family. Requires heme as cofactor.

The protein resides in the membrane. It functions in the pathway secondary metabolite biosynthesis. Functionally, cytochrome P450 monooxygenase that is able to use delta(6)-protoilludene as a substrate to produce delta(6)-protoilludene-5-ol and an unidentified hydroxyprotoilludene. Is also able to use phenanthrene as a substrate for oxidation. The protein is Cytochrome P450 monooxygenase 176 of Postia placenta (strain ATCC 44394 / Madison 698-R) (Brown rot fungus).